The following is a 237-amino-acid chain: Large ribosomal subunit protein uL1 (237 aa).

This sequence belongs to the universal ribosomal protein uL1 family. In terms of assembly, part of the 50S ribosomal subunit.

In terms of biological role, binds directly to 23S rRNA. The L1 stalk is quite mobile in the ribosome, and is involved in E site tRNA release. Functionally, protein L1 is also a translational repressor protein, it controls the translation of the L11 operon by binding to its mRNA. This Dehalococcoides mccartyi (strain ATCC BAA-2100 / JCM 16839 / KCTC 5957 / BAV1) protein is Large ribosomal subunit protein uL1.